Reading from the N-terminus, the 80-residue chain is uncharacterized protein (80 aa).

This is an uncharacterized protein from Haemophilus influenzae (strain ATCC 51907 / DSM 11121 / KW20 / Rd).